A 425-amino-acid polypeptide reads, in one-letter code: Serine--tRNA ligase (425 aa).

228–230 (TAE) lines the L-serine pocket. 259 to 261 (RSE) is a binding site for ATP. An L-serine-binding site is contributed by E282. 346–349 (EIAS) provides a ligand contact to ATP. Position 382 (S382) interacts with L-serine.

Belongs to the class-II aminoacyl-tRNA synthetase family. Type-1 seryl-tRNA synthetase subfamily. Homodimer. The tRNA molecule binds across the dimer.

It is found in the cytoplasm. It carries out the reaction tRNA(Ser) + L-serine + ATP = L-seryl-tRNA(Ser) + AMP + diphosphate + H(+). The enzyme catalyses tRNA(Sec) + L-serine + ATP = L-seryl-tRNA(Sec) + AMP + diphosphate + H(+). Its pathway is aminoacyl-tRNA biosynthesis; selenocysteinyl-tRNA(Sec) biosynthesis; L-seryl-tRNA(Sec) from L-serine and tRNA(Sec): step 1/1. Functionally, catalyzes the attachment of serine to tRNA(Ser). Is also able to aminoacylate tRNA(Sec) with serine, to form the misacylated tRNA L-seryl-tRNA(Sec), which will be further converted into selenocysteinyl-tRNA(Sec). The chain is Serine--tRNA ligase from Rickettsia canadensis (strain McKiel).